A 388-amino-acid polypeptide reads, in one-letter code: Beta-1,4-galactosyltransferase 5 (388 aa).

The Cytoplasmic segment spans residues Met-1 to Ser-14. A helical; Signal-anchor for type II membrane protein transmembrane segment spans residues Leu-15–Ala-35. The Lumenal portion of the chain corresponds to Pro-36–Tyr-388. 4 N-linked (GlcNAc...) asparagine glycosylation sites follow: Asn-77, Asn-81, Asn-90, and Asn-128. A disulfide bridge links Cys-114 with Cys-158. Residues Pro-169–Arg-173, Phe-208–Arg-210, Val-235–Asp-236, Tyr-264, and Trp-296 each bind UDP-alpha-D-galactose. Cys-229 and Cys-248 are joined by a disulfide. Residue Asp-236 participates in Mn(2+) binding. Gly-298–Asp-301 is an N-acetyl-D-glucosamine binding site. Position 329 (His-329) interacts with Mn(2+). His-329–His-330 is a UDP-alpha-D-galactose binding site. Arg-340 is a binding site for N-acetyl-D-glucosamine. 3 N-linked (GlcNAc...) asparagine glycosylation sites follow: Asn-360, Asn-364, and Asn-373.

It belongs to the glycosyltransferase 7 family. Mn(2+) serves as cofactor. In terms of tissue distribution, highest levels in heart, brain, liver and kidney with lower levels in spleen, lung and testis.

Its subcellular location is the golgi apparatus. The protein resides in the golgi stack membrane. The enzyme catalyses a beta-D-glucosyl-(1&lt;-&gt;1')-N-acylsphing-4-enine + UDP-alpha-D-galactose = a beta-D-Gal-(1-&gt;4)-beta-D-Glc-(1&lt;-&gt;1)-Cer(d18:1(4E)) + UDP + H(+). It functions in the pathway protein modification; protein glycosylation. The protein operates within sphingolipid metabolism. In terms of biological role, catalyzes the synthesis of lactosylceramide (LacCer) via the transfer of galactose from UDP-galactose to glucosylceramide (GlcCer). LacCer is the starting point in the biosynthesis of all gangliosides (membrane-bound glycosphingolipids) which play pivotal roles in the CNS including neuronal maturation and axonal and myelin formation. Plays a role in the glycosylation of BMPR1A and regulation of its protein stability. Essential for extraembryonic development during early embryogenesis. The polypeptide is Beta-1,4-galactosyltransferase 5 (Mus musculus (Mouse)).